The primary structure comprises 84 residues: RNA-binding protein Hfq (84 aa).

A Sm domain is found at 11-71 (DTFLNFVRKN…ISTIMPGAPI (61 aa)).

It belongs to the Hfq family. Homohexamer.

Functionally, RNA chaperone that binds small regulatory RNA (sRNAs) and mRNAs to facilitate mRNA translational regulation in response to envelope stress, environmental stress and changes in metabolite concentrations. Also binds with high specificity to tRNAs. The chain is RNA-binding protein Hfq from Beijerinckia indica subsp. indica (strain ATCC 9039 / DSM 1715 / NCIMB 8712).